We begin with the raw amino-acid sequence, 75 residues long: Small ribosomal subunit protein bS18 (75 aa).

It belongs to the bacterial ribosomal protein bS18 family. In terms of assembly, part of the 30S ribosomal subunit. Forms a tight heterodimer with protein bS6.

Its function is as follows. Binds as a heterodimer with protein bS6 to the central domain of the 16S rRNA, where it helps stabilize the platform of the 30S subunit. This chain is Small ribosomal subunit protein bS18, found in Paracoccus denitrificans (strain Pd 1222).